The primary structure comprises 74 residues: ATP synthase subunit c (74 aa).

2 consecutive transmembrane segments (helical) span residues 8 to 28 and 52 to 72; these read FIGV…VSNI and IGAG…MLLI.

This sequence belongs to the ATPase C chain family. F-type ATPases have 2 components, F(1) - the catalytic core - and F(0) - the membrane proton channel. F(1) has five subunits: alpha(3), beta(3), gamma(1), delta(1), epsilon(1). F(0) has three main subunits: a(1), b(2) and c(10-14). The alpha and beta chains form an alternating ring which encloses part of the gamma chain. F(1) is attached to F(0) by a central stalk formed by the gamma and epsilon chains, while a peripheral stalk is formed by the delta and b chains.

Its subcellular location is the cell inner membrane. Functionally, f(1)F(0) ATP synthase produces ATP from ADP in the presence of a proton or sodium gradient. F-type ATPases consist of two structural domains, F(1) containing the extramembraneous catalytic core and F(0) containing the membrane proton channel, linked together by a central stalk and a peripheral stalk. During catalysis, ATP synthesis in the catalytic domain of F(1) is coupled via a rotary mechanism of the central stalk subunits to proton translocation. In terms of biological role, key component of the F(0) channel; it plays a direct role in translocation across the membrane. A homomeric c-ring of between 10-14 subunits forms the central stalk rotor element with the F(1) delta and epsilon subunits. The polypeptide is ATP synthase subunit c (Rickettsia bellii (strain RML369-C)).